We begin with the raw amino-acid sequence, 1102 residues long: WASH complex subunit 4 (1102 aa).

It belongs to the SWIP family. In terms of assembly, component of the WASH complex.

It is found in the early endosome. Its function is as follows. Acts at least in part as component of the WASH complex which may regulate wash nucleation-promoting factor (NPF) activity and is required for its membrane targeting during endosomal sorting. During embryogenesis, not involved in the wash-dependent developmental migration of hemocytes anteriorly from the tail. The protein is WASH complex subunit 4 of Drosophila melanogaster (Fruit fly).